A 456-amino-acid polypeptide reads, in one-letter code: Bifunctional protein GlmU (456 aa).

Residues 1–228 (MPQNTLNTVI…SHLAAGVNNK (228 aa)) are pyrophosphorylase. Residues 11 to 14 (LAAG), Lys25, Gln75, 80 to 81 (GT), 102 to 104 (YGD), Gly138, Glu153, Asn168, and Asn226 contribute to the UDP-N-acetyl-alpha-D-glucosamine site. Asp104 is a Mg(2+) binding site. Asn226 serves as a coordination point for Mg(2+). The linker stretch occupies residues 229-249 (RQLAELERIFQTEQAQELLKA). An N-acetyltransferase region spans residues 250-456 (GVTLRDPARF…GWVRPEKNKQ (207 aa)). Residues Arg332 and Lys350 each coordinate UDP-N-acetyl-alpha-D-glucosamine. The active-site Proton acceptor is His362. Residues Tyr365 and Asn376 each coordinate UDP-N-acetyl-alpha-D-glucosamine. Residues Ala379, 385–386 (NY), Ser404, Ala422, and Arg439 each bind acetyl-CoA.

The protein in the N-terminal section; belongs to the N-acetylglucosamine-1-phosphate uridyltransferase family. In the C-terminal section; belongs to the transferase hexapeptide repeat family. In terms of assembly, homotrimer. The cofactor is Mg(2+).

It is found in the cytoplasm. The enzyme catalyses alpha-D-glucosamine 1-phosphate + acetyl-CoA = N-acetyl-alpha-D-glucosamine 1-phosphate + CoA + H(+). It catalyses the reaction N-acetyl-alpha-D-glucosamine 1-phosphate + UTP + H(+) = UDP-N-acetyl-alpha-D-glucosamine + diphosphate. Its pathway is nucleotide-sugar biosynthesis; UDP-N-acetyl-alpha-D-glucosamine biosynthesis; N-acetyl-alpha-D-glucosamine 1-phosphate from alpha-D-glucosamine 6-phosphate (route II): step 2/2. It functions in the pathway nucleotide-sugar biosynthesis; UDP-N-acetyl-alpha-D-glucosamine biosynthesis; UDP-N-acetyl-alpha-D-glucosamine from N-acetyl-alpha-D-glucosamine 1-phosphate: step 1/1. It participates in bacterial outer membrane biogenesis; LPS lipid A biosynthesis. Its function is as follows. Catalyzes the last two sequential reactions in the de novo biosynthetic pathway for UDP-N-acetylglucosamine (UDP-GlcNAc). The C-terminal domain catalyzes the transfer of acetyl group from acetyl coenzyme A to glucosamine-1-phosphate (GlcN-1-P) to produce N-acetylglucosamine-1-phosphate (GlcNAc-1-P), which is converted into UDP-GlcNAc by the transfer of uridine 5-monophosphate (from uridine 5-triphosphate), a reaction catalyzed by the N-terminal domain. The sequence is that of Bifunctional protein GlmU from Neisseria gonorrhoeae.